Consider the following 487-residue polypeptide: Probable UDP-N-acetylglucosamine pyrophosphorylase (487 aa).

A Substrate binding motif is present at residues 105–108 (LAGG). Residues 105–108 (LAGG), K119, Q198, and G225 contribute to the UTP site. Position 226 (N226) interacts with substrate. Residue D256 participates in UTP binding. Residues 307–308 (EY) carry the Substrate binding motif. K382 contributes to the UTP binding site. Position 412 (K412) interacts with substrate.

The protein belongs to the UDPGP type 1 family.

The protein localises to the cytoplasm. It carries out the reaction N-acetyl-alpha-D-glucosamine 1-phosphate + UTP + H(+) = UDP-N-acetyl-alpha-D-glucosamine + diphosphate. Its pathway is nucleotide-sugar biosynthesis; UDP-N-acetyl-alpha-D-glucosamine biosynthesis; UDP-N-acetyl-alpha-D-glucosamine from N-acetyl-alpha-D-glucosamine 1-phosphate: step 1/1. The sequence is that of Probable UDP-N-acetylglucosamine pyrophosphorylase (uap1) from Dictyostelium discoideum (Social amoeba).